Reading from the N-terminus, the 164-residue chain is QYSWMCLSSFALSWRSYKHTNSQFLYFAPDLVFNEEKMHQSAMYELCQGMHQISLQFVRLQLTFEEYTIMKVLLLLSTIPKDGLKSQAAFEEMRTNYIKELRKMVTRCPNNSGQSWQRFYQLTKLLDSMHDLVSDLLEFCFYTFRESQALKVEFPRCWWRSSPT.

An NR LBD domain is found at Gln1–Ser162. Residues Arg15 and Thr143 each coordinate 21-hydroxyprogesterone. Residues Arg15 and Thr143 each contribute to the aldosterone site. Arg15 and Thr143 together coordinate progesterone.

This sequence belongs to the nuclear hormone receptor family. NR3 subfamily. In terms of assembly, heteromultimeric cytoplasmic complex with HSP90, HSP70, and FKBP4, in the absence of ligand. After ligand binding, it translocates to the nucleus and binds to DNA as a homodimer and as a heterodimer with NR3C1. Binds the coactivator NCOA2. May interact with HSD11B2 in the absence of ligand. Binds the coactivators NCOA1, TIF1 and NRIP1. Phosphorylated.

It localises to the cytoplasm. Its subcellular location is the nucleus. The protein resides in the endoplasmic reticulum membrane. Receptor for both mineralocorticoids (MC) such as aldosterone and glucocorticoids (GC) such as corticosterone or cortisol. Binds to mineralocorticoid response elements (MRE) and transactivates target genes. The effect of MC is to increase ion and water transport and thus raise extracellular fluid volume and blood pressure and lower potassium levels. This is Mineralocorticoid receptor (NR3C2) from Sus scrofa (Pig).